The chain runs to 262 residues: Small ribosomal subunit protein uS2 (262 aa).

Belongs to the universal ribosomal protein uS2 family.

The sequence is that of Small ribosomal subunit protein uS2 from Borreliella afzelii (strain PKo) (Borrelia afzelii).